Here is a 633-residue protein sequence, read N- to C-terminus: tRNA uridine 5-carboxymethylaminomethyl modification enzyme MnmG (633 aa).

FAD contacts are provided by residues 13–18, Val125, and Ser180; that span reads GGGHAG. 273–287 provides a ligand contact to NAD(+); it reads GPRYCPSIEDKITRF. Residue Gln370 coordinates FAD.

It belongs to the MnmG family. Homodimer. Heterotetramer of two MnmE and two MnmG subunits. It depends on FAD as a cofactor.

It is found in the cytoplasm. Its function is as follows. NAD-binding protein involved in the addition of a carboxymethylaminomethyl (cmnm) group at the wobble position (U34) of certain tRNAs, forming tRNA-cmnm(5)s(2)U34. In Alteromonas mediterranea (strain DSM 17117 / CIP 110805 / LMG 28347 / Deep ecotype), this protein is tRNA uridine 5-carboxymethylaminomethyl modification enzyme MnmG.